Reading from the N-terminus, the 250-residue chain is AA9 family lytic polysaccharide monooxygenase E (250 aa).

The signal sequence occupies residues 1-21; it reads MAMSKIMSLTGLLASASLVAG. The Cu(2+) site is built by His-22 and His-107. Disulfide bonds link Cys-77-Cys-199 and Cys-118-Cys-122. The N-linked (GlcNAc...) asparagine glycan is linked to Asn-159. O2 is bound by residues His-185 and Gln-194. Cu(2+) is bound at residue Tyr-196.

This sequence belongs to the polysaccharide monooxygenase AA9 family. Requires Cu(2+) as cofactor.

The protein localises to the secreted. The catalysed reaction is [(1-&gt;4)-beta-D-glucosyl]n+m + reduced acceptor + O2 = 4-dehydro-beta-D-glucosyl-[(1-&gt;4)-beta-D-glucosyl]n-1 + [(1-&gt;4)-beta-D-glucosyl]m + acceptor + H2O.. Its function is as follows. Lytic polysaccharide monooxygenase (LPMO) that depolymerizes crystalline and amorphous polysaccharides via the oxidation of scissile alpha- or beta-(1-4)-glycosidic bonds, yielding C1 or C4 oxidation products. Catalysis by LPMOs requires the reduction of the active-site copper from Cu(II) to Cu(I) by a reducing agent and H(2)O(2) or O(2) as a cosubstrate. This is AA9 family lytic polysaccharide monooxygenase E from Aspergillus tamarii.